Here is a 306-residue protein sequence, read N- to C-terminus: Pseudouridine-5'-phosphate glycosidase (306 aa).

The active-site Proton donor is the E28. The substrate site is built by K89 and V109. Position 139 (D139) interacts with Mn(2+). A substrate-binding site is contributed by S141 to D143. K160 (nucleophile) is an active-site residue.

This sequence belongs to the pseudouridine-5'-phosphate glycosidase family. In terms of assembly, homotrimer. Mn(2+) is required as a cofactor.

The enzyme catalyses D-ribose 5-phosphate + uracil = psi-UMP + H2O. In terms of biological role, catalyzes the reversible cleavage of pseudouridine 5'-phosphate (PsiMP) to ribose 5-phosphate and uracil. Functions biologically in the cleavage direction, as part of a pseudouridine degradation pathway. The polypeptide is Pseudouridine-5'-phosphate glycosidase (Gemmatimonas aurantiaca (strain DSM 14586 / JCM 11422 / NBRC 100505 / T-27)).